Consider the following 338-residue polypeptide: RNA 3'-terminal phosphate cyclase (338 aa).

ATP-binding positions include Gln103 and 283–287; that span reads YLADQ. His308 acts as the Tele-AMP-histidine intermediate in catalysis.

This sequence belongs to the RNA 3'-terminal cyclase family. Type 1 subfamily.

The protein localises to the cytoplasm. The catalysed reaction is a 3'-end 3'-phospho-ribonucleotide-RNA + ATP = a 3'-end 2',3'-cyclophospho-ribonucleotide-RNA + AMP + diphosphate. Catalyzes the conversion of 3'-phosphate to a 2',3'-cyclic phosphodiester at the end of RNA. The mechanism of action of the enzyme occurs in 3 steps: (A) adenylation of the enzyme by ATP; (B) transfer of adenylate to an RNA-N3'P to produce RNA-N3'PP5'A; (C) and attack of the adjacent 2'-hydroxyl on the 3'-phosphorus in the diester linkage to produce the cyclic end product. The biological role of this enzyme is unknown but it is likely to function in some aspects of cellular RNA processing. In Escherichia coli O6:K15:H31 (strain 536 / UPEC), this protein is RNA 3'-terminal phosphate cyclase.